Consider the following 337-residue polypeptide: UDP-N-acetylenolpyruvoylglucosamine reductase (337 aa).

Residues 17-186 (IEAKAKQFIA…TSVIYKLTKR (170 aa)) form the FAD-binding PCMH-type domain. R162 is an active-site residue. S237 functions as the Proton donor in the catalytic mechanism. The active site involves E333.

The protein belongs to the MurB family. The cofactor is FAD.

It is found in the cytoplasm. The enzyme catalyses UDP-N-acetyl-alpha-D-muramate + NADP(+) = UDP-N-acetyl-3-O-(1-carboxyvinyl)-alpha-D-glucosamine + NADPH + H(+). Its pathway is cell wall biogenesis; peptidoglycan biosynthesis. In terms of biological role, cell wall formation. This chain is UDP-N-acetylenolpyruvoylglucosamine reductase, found in Flavobacterium johnsoniae (strain ATCC 17061 / DSM 2064 / JCM 8514 / BCRC 14874 / CCUG 350202 / NBRC 14942 / NCIMB 11054 / UW101) (Cytophaga johnsonae).